We begin with the raw amino-acid sequence, 122 residues long: Large ribosomal subunit protein uL14 (122 aa).

This sequence belongs to the universal ribosomal protein uL14 family. As to quaternary structure, part of the 50S ribosomal subunit. Forms a cluster with proteins L3 and L19. In the 70S ribosome, L14 and L19 interact and together make contacts with the 16S rRNA in bridges B5 and B8.

Binds to 23S rRNA. Forms part of two intersubunit bridges in the 70S ribosome. This is Large ribosomal subunit protein uL14 from Hahella chejuensis (strain KCTC 2396).